The sequence spans 235 residues: Aspartate/glutamate leucyltransferase (235 aa).

This sequence belongs to the R-transferase family. Bpt subfamily.

Its subcellular location is the cytoplasm. The catalysed reaction is N-terminal L-glutamyl-[protein] + L-leucyl-tRNA(Leu) = N-terminal L-leucyl-L-glutamyl-[protein] + tRNA(Leu) + H(+). It carries out the reaction N-terminal L-aspartyl-[protein] + L-leucyl-tRNA(Leu) = N-terminal L-leucyl-L-aspartyl-[protein] + tRNA(Leu) + H(+). Its function is as follows. Functions in the N-end rule pathway of protein degradation where it conjugates Leu from its aminoacyl-tRNA to the N-termini of proteins containing an N-terminal aspartate or glutamate. In Pseudomonas entomophila (strain L48), this protein is Aspartate/glutamate leucyltransferase.